The following is a 79-amino-acid chain: Major outer membrane lipoprotein Lpp 2 (79 aa).

An N-terminal signal peptide occupies residues 1–21; the sequence is MNRTNKLILGAVVLGSTLLAG. Cys-22 carries the N-palmitoyl cysteine lipid modification. Cys-22 is lipidated: S-diacylglycerol cysteine. 2 repeats span residues 25 to 35 and 39 to 49; these read NAKIDQLSSDV and SAKVDQLSNDV. Residues 28-69 adopt a coiled-coil conformation; it reads IDQLSSDVQTLSAKVDQLSNDVNAMRSDVQAAKDDAARANQR. Lys-79 is modified (N6-murein peptidoglycan lysine).

This sequence belongs to the Lpp family. Homotrimer.

It is found in the cell outer membrane. The protein resides in the secreted. The protein localises to the cell wall. In terms of biological role, a highly abundant outer membrane lipoprotein that controls the distance between the inner and outer membranes. The only protein known to be covalently linked to the peptidoglycan network (PGN). Also non-covalently binds the PGN. The link between the cell outer membrane and PGN contributes to maintenance of the structural and functional integrity of the cell envelope, and maintains the correct distance between the PGN and the outer membrane. This is Major outer membrane lipoprotein Lpp 2 from Salmonella typhi.